The following is a 245-amino-acid chain: Ribonuclease 3 (245 aa).

The RNase III domain maps to 17-146 (FTDKMKSLGL…FVGALYLDQG (130 aa)). Glu-59 provides a ligand contact to Mg(2+). Asp-63 is a catalytic residue. The Mg(2+) site is built by Asp-132 and Glu-135. Glu-135 is an active-site residue. The region spanning 172-241 (DFKTQFQEYV…AEQAYKLMKN (70 aa)) is the DRBM domain.

Belongs to the ribonuclease III family. In terms of assembly, homodimer. Mg(2+) serves as cofactor.

The protein localises to the cytoplasm. It catalyses the reaction Endonucleolytic cleavage to 5'-phosphomonoester.. In terms of biological role, digests double-stranded RNA. Involved in the processing of primary rRNA transcript to yield the immediate precursors to the large and small rRNAs (23S and 16S). Processes some mRNAs, and tRNAs when they are encoded in the rRNA operon. Processes pre-crRNA and tracrRNA of type II CRISPR loci if present in the organism. The polypeptide is Ribonuclease 3 (Staphylococcus epidermidis (strain ATCC 35984 / DSM 28319 / BCRC 17069 / CCUG 31568 / BM 3577 / RP62A)).